The sequence spans 503 residues: ATP synthase subunit alpha (503 aa).

Residue 169-176 (GDRKTGKT) participates in ATP binding.

Belongs to the ATPase alpha/beta chains family. As to quaternary structure, F-type ATPases have 2 components, CF(1) - the catalytic core - and CF(0) - the membrane proton channel. CF(1) has five subunits: alpha(3), beta(3), gamma(1), delta(1), epsilon(1). CF(0) has three main subunits: a(1), b(2) and c(9-12). The alpha and beta chains form an alternating ring which encloses part of the gamma chain. CF(1) is attached to CF(0) by a central stalk formed by the gamma and epsilon chains, while a peripheral stalk is formed by the delta and b chains.

It is found in the cell membrane. It carries out the reaction ATP + H2O + 4 H(+)(in) = ADP + phosphate + 5 H(+)(out). Functionally, produces ATP from ADP in the presence of a proton gradient across the membrane. The alpha chain is a regulatory subunit. The protein is ATP synthase subunit alpha of Ligilactobacillus salivarius (strain UCC118) (Lactobacillus salivarius).